The primary structure comprises 727 residues: Probable metal-nicotianamine transporter YSL14 (727 aa).

Low complexity-rich tracts occupy residues 1–10 (MAQHTAAAAG) and 18–27 (AEAAAAAAAG). A disordered region spans residues 1 to 61 (MAQHTAAAAG…RNGGADDPDA (61 aa)). Positions 45–54 (AGGGGGGRNG) are enriched in gly residues. 14 helical membrane-spanning segments follow: residues 84-104 (AFVV…KLNL), 107-127 (GIIP…VRLW), 152-172 (CVVS…LFGM), 194-214 (LGWM…ALVP), 256-276 (LGKY…YTAG), 314-334 (IVNV…WPLI), 359-379 (VFIS…KVLI), 432-452 (VAYG…PEIF), 460-480 (ILVA…GSGL), 492-512 (LAIF…LVGL), 546-566 (FISQ…VFWL), 604-624 (PENC…INLI), 646-666 (FYIG…LFVW), and 681-701 (VASG…ILAL).

The protein belongs to the YSL (TC 2.A.67.2) family. As to expression, expressed in leaves and at low levels in roots.

Its subcellular location is the membrane. Functionally, may be involved in the transport of nicotianamine-chelated metals. This chain is Probable metal-nicotianamine transporter YSL14 (YSL14), found in Oryza sativa subsp. japonica (Rice).